Consider the following 92-residue polypeptide: Small ribosomal subunit protein uS19 (92 aa).

It belongs to the universal ribosomal protein uS19 family.

Its function is as follows. Protein S19 forms a complex with S13 that binds strongly to the 16S ribosomal RNA. The sequence is that of Small ribosomal subunit protein uS19 from Bacillus thuringiensis subsp. konkukian (strain 97-27).